We begin with the raw amino-acid sequence, 482 residues long: Cardiolipin synthase (482 aa).

The next 2 helical transmembrane spans lie at 4-24 and 34-54; these read LAYL…VTVF and WAWL…YLIF. PLD phosphodiesterase domains follow at residues 217-244 and 395-422; these read LNYR…GDEY and DNGF…DFRS. Active-site residues include H222, K224, D229, H400, K402, and D407.

This sequence belongs to the phospholipase D family. Cardiolipin synthase subfamily.

It is found in the cell membrane. The enzyme catalyses 2 a 1,2-diacyl-sn-glycero-3-phospho-(1'-sn-glycerol) = a cardiolipin + glycerol. In terms of biological role, catalyzes the reversible phosphatidyl group transfer from one phosphatidylglycerol molecule to another to form cardiolipin (CL) (diphosphatidylglycerol) and glycerol. In Listeria monocytogenes serotype 4a (strain HCC23), this protein is Cardiolipin synthase (cls).